Consider the following 705-residue polypeptide: 1,4-alpha-glucan branching enzyme GlgB (705 aa).

The Nucleophile role is filled by D309. The active-site Proton donor is the E360. Residues 654–705 (VQVERAADPRPNEQQRLVAETPAHEGGRSAPADAAESAEQKPDDEQKGGKKA) are disordered. Residues 691–705 (AEQKPDDEQKGGKKA) show a composition bias toward basic and acidic residues.

The protein belongs to the glycosyl hydrolase 13 family. GlgB subfamily. In terms of assembly, monomer.

It carries out the reaction Transfers a segment of a (1-&gt;4)-alpha-D-glucan chain to a primary hydroxy group in a similar glucan chain.. It participates in glycan biosynthesis; glycogen biosynthesis. Catalyzes the formation of the alpha-1,6-glucosidic linkages in glycogen by scission of a 1,4-alpha-linked oligosaccharide from growing alpha-1,4-glucan chains and the subsequent attachment of the oligosaccharide to the alpha-1,6 position. This is 1,4-alpha-glucan branching enzyme GlgB from Deinococcus radiodurans (strain ATCC 13939 / DSM 20539 / JCM 16871 / CCUG 27074 / LMG 4051 / NBRC 15346 / NCIMB 9279 / VKM B-1422 / R1).